Here is a 106-residue protein sequence, read N- to C-terminus: Phosphoribosyl-ATP pyrophosphatase (106 aa).

This sequence belongs to the PRA-PH family.

It is found in the cytoplasm. It carries out the reaction 1-(5-phospho-beta-D-ribosyl)-ATP + H2O = 1-(5-phospho-beta-D-ribosyl)-5'-AMP + diphosphate + H(+). Its pathway is amino-acid biosynthesis; L-histidine biosynthesis; L-histidine from 5-phospho-alpha-D-ribose 1-diphosphate: step 2/9. This is Phosphoribosyl-ATP pyrophosphatase from Lactiplantibacillus plantarum (strain ATCC BAA-793 / NCIMB 8826 / WCFS1) (Lactobacillus plantarum).